The sequence spans 234 residues: MTERNTSTDSPEKRAAGIAAAGLVSSGMLVGLGTGSTVAYTIKELGRRVREEGLDILGVVTSYQSEMLAIEAGIRLTTLAQHPELDLAIDGADQIDSELRAIKGGGAAHTREKIVSVSARRFVVVADESKTSKQLDKLVPVEVLPFAKEPVVKKIRELGGKPQLRSAVKKDGPVITDNGNFVLDVEFGVIKDPEALALQLSSIPGVVEHGIFCNVSELYIGNKDGAIKIITRQK.

Substrate contacts are provided by residues 34–37 (TGST), 90–93 (DGAD), and 103–106 (KGGG). The active-site Proton acceptor is the E112. K130 serves as a coordination point for substrate.

Belongs to the ribose 5-phosphate isomerase family. In terms of assembly, homodimer.

It carries out the reaction aldehydo-D-ribose 5-phosphate = D-ribulose 5-phosphate. It functions in the pathway carbohydrate degradation; pentose phosphate pathway; D-ribose 5-phosphate from D-ribulose 5-phosphate (non-oxidative stage): step 1/1. Catalyzes the reversible conversion of ribose-5-phosphate to ribulose 5-phosphate. In Methanosarcina acetivorans (strain ATCC 35395 / DSM 2834 / JCM 12185 / C2A), this protein is Ribose-5-phosphate isomerase A.